The following is a 357-amino-acid chain: Probable butyrate kinase (357 aa).

Belongs to the acetokinase family.

The protein localises to the cytoplasm. It carries out the reaction butanoate + ATP = butanoyl phosphate + ADP. This Thermotoga petrophila (strain ATCC BAA-488 / DSM 13995 / JCM 10881 / RKU-1) protein is Probable butyrate kinase.